Here is an 87-residue protein sequence, read N- to C-terminus: MAEKEMNFEEALARLEAVVKELEDGRLPLQKALELFAEGIGLSRICNRYLEDAEQRIAILTADEKGGVVLRELGPSPAAREDTNDEL.

The protein belongs to the XseB family. In terms of assembly, heterooligomer composed of large and small subunits.

The protein resides in the cytoplasm. The catalysed reaction is Exonucleolytic cleavage in either 5'- to 3'- or 3'- to 5'-direction to yield nucleoside 5'-phosphates.. Its function is as follows. Bidirectionally degrades single-stranded DNA into large acid-insoluble oligonucleotides, which are then degraded further into small acid-soluble oligonucleotides. The protein is Exodeoxyribonuclease 7 small subunit of Pelotomaculum thermopropionicum (strain DSM 13744 / JCM 10971 / SI).